The primary structure comprises 2253 residues: Genome polyprotein (2253 aa).

A disulfide bridge connects residues Cys627 and Cys694. The Cell attachment site signature appears at 750–752; sequence RVD. One can recognise an LRAT domain in the interval 825–920; sequence LVYKNRGFYK…LFPGRKEITQ (96 aa). Residues His835 and His846 each act as for protein 2A H-NC in the active site. Residue Cys904 is the For protein 2A H-NC; Acyl-thioester intermediate of the active site. The chain crosses the membrane as a helical span at residues 1002–1022; that stretch reads IVLYCHAPNMLTTMCLGTLLV. The 162-residue stretch at 1205–1366 folds into the SF3 helicase domain; it reads YSEMMRVNVR…ASYSRNNKLD (162 aa). Tyr1559 bears the O-(5'-phospho-RNA)-tyrosine mark. A Peptidase C3 domain is found at 1586–1775; that stretch reads APYMQDLEHC…RAAAVHFISN (190 aa). Catalysis depends on for protease 3C activity residues His1626, Asp1664, and Cys1739. The Acyl-thioester intermediate role is filled by Cys1970. The RdRp catalytic domain maps to 2018 to 2132; the sequence is PYNYGLDYSS…SVSSPLDAEY (115 aa). The Mg(2+) site is built by Asp2024 and Asp2118.

Belongs to the picornaviruses polyprotein family. In terms of assembly, interacts with capsid protein VP1 and capsid protein VP3 to form heterotrimeric protomers. Five protomers subsequently associate to form pentamers which serve as building blocks for the capsid. As to quaternary structure, interacts with capsid protein VP0, and capsid protein VP3 to form heterotrimeric protomers. Five protomers subsequently associate to form pentamers which serve as building blocks for the capsid. Interacts with capsid protein VP0 and capsid protein VP1 to form heterotrimeric protomers. Five protomers subsequently associate to form pentamers which serve as building blocks for the capsid. In terms of assembly, homohexamer; forms a hexameric ring structure with 6-fold symmetry characteristic of AAA+ ATPases. As to quaternary structure, homodimer. Interacts with host ACBD3. Interacts with RNA-directed RNA polymerase. In terms of assembly, interacts with Viral protein genome-linked. The cofactor is Mg(2+). In terms of processing, VPg is uridylylated by the polymerase and is covalently linked to the 5'-end of genomic RNA. This uridylylated form acts as a nucleotide-peptide primer for the polymerase. Specific enzymatic cleavages yield mature proteins. All cleavages are catalyzed by P3C.

The protein localises to the virion. Its subcellular location is the host cytoplasm. It is found in the host nucleus. It localises to the host nucleolus. The protein resides in the host cytoplasmic vesicle membrane. The protein localises to the host endoplasmic reticulum membrane. Its subcellular location is the host Golgi apparatus membrane. It catalyses the reaction RNA(n) + a ribonucleoside 5'-triphosphate = RNA(n+1) + diphosphate. It carries out the reaction a ribonucleoside 5'-triphosphate + H2O = a ribonucleoside 5'-diphosphate + phosphate + H(+). The catalysed reaction is Selective cleavage of Gln-|-Gly bond in the poliovirus polyprotein. In other picornavirus reactions Glu may be substituted for Gln, and Ser or Thr for Gly.. Forms an icosahedral capsid of pseudo T=3 symmetry together with capsid proteins VP1 and VP3. The capsid is 300 Angstroms in diameter, composed of 60 copies of each capsid protein and enclosing the viral positive strand RNA genome. The attachment to the host cell receptor induces virion internalization predominantly through clathrin-mediated endocytosis. Binds packaging signals present in the viral RNA. Its function is as follows. Forms an icosahedral capsid of pseudo T=3 symmetry together with capsid proteins VP0 and VP1. The capsid is 300 Angstroms in diameter, composed of 60 copies of each capsid protein and enclosing the viral positive strand RNA genome. The attachment to the host cell receptor induces virion internalization predominantly through clathrin-mediated endocytosis. Binds packaging signals present in the viral RNA. In terms of biological role, forms an icosahedral capsid of pseudo T=3 symmetry together with capsid proteins VP0 and VP3. The capsid is 300 Angstroms in diameter, composed of 60 copies of each capsid protein and enclosing the viral positive strand RNA genome. The attachment to the host cell receptor induces virion internalization predominantly through clathrin-mediated endocytosis. Binds packaging signals present in the viral RNA. Functionally, mediates self-processing of the polyprotein by a translational effect termed 'ribosome skipping'. Mechanistically, 2A1-mediated cleavage occurs between the C-terminal glycine and the proline of the downstream protein 2A2. Plays an essential role in the virus replication cycle by acting as a viroporin. Creates a pore in the host endoplasmic reticulum and as a consequence releases Ca2+ in the cytoplasm of infected cell. In turn, high levels of cytoplasmic calcium may trigger membrane trafficking and transport of viral ER-associated proteins to viroplasms, sites of viral genome replication. Its function is as follows. Induces and associates with structural rearrangements of intracellular membranes. Displays RNA-binding, nucleotide binding and NTPase activities. May play a role in virion morphogenesis and viral RNA encapsidation by interacting with the capsid protein VP3. In terms of biological role, localizes the viral replication complex to the surface of membranous vesicles. It inhibits host cell endoplasmic reticulum-to-Golgi apparatus transport and causes the disassembly of the Golgi complex, possibly through GBF1 interaction. This would result in depletion of MHC, trail receptors and IFN receptors at the host cell surface. Plays an essential role in viral RNA replication by recruiting ACBD3 and PI4KB at the viral replication sites, thereby allowing the formation of the rearranged membranous structures where viral replication takes place. Functionally, acts as a primer for viral RNA replication and remains covalently bound to viral genomic RNA. VPg is uridylylated prior to priming replication into VPg-pUpU. The VPg-pUpU is then used as primer on the genomic RNA poly(A) by the RNA-dependent RNA polymerase to replicate the viral genome. Following genome release from the infecting virion in the cytoplasm, the VPg-RNA linkage is probably removed by host TDP2. During the late stage of the replication cycle, host TDP2 is excluded from sites of viral RNA synthesis and encapsidation, allowing for the generation of progeny virions. Cysteine protease that generates mature viral proteins from the precursor polyprotein. In addition to its proteolytic activity, it binds to viral RNA, and thus influences viral genome replication. RNA and substrate bind cooperatively to the protease. Its function is as follows. Replicates the viral genomic RNA on the surface of intracellular membranes. Covalently attaches UMP to a tyrosine of VPg, which is used to prime RNA synthesis. The positive stranded RNA genome is first replicated at virus induced membranous vesicles, creating a dsRNA genomic replication form. This dsRNA is then used as template to synthesize positive stranded RNA genomes. ss(+)RNA genomes are either translated, replicated or encapsidated. This Ljunganvirus 1 (LV) protein is Genome polyprotein.